A 976-amino-acid chain; its full sequence is Probable outer membrane protein PmpA (976 aa).

The first 50 residues, 1-50 (MNQVIKTIALCYQKYISRASNKTFSIHNTLSLSLLPKCLLGSLIIYTSHA), serve as a signal peptide directing secretion. Positions 671–976 (GNAIPNSLWS…SLSCGGYVGF (306 aa)) constitute an Autotransporter domain.

Belongs to the PMP outer membrane protein family.

It is found in the secreted. It localises to the cell wall. The protein resides in the cell outer membrane. The protein is Probable outer membrane protein PmpA (pmpA) of Chlamydia muridarum (strain MoPn / Nigg).